Reading from the N-terminus, the 700-residue chain is DNA ligase (700 aa).

Residues 42-46 (DDEYD), 91-92 (SL), and Glu126 each bind NAD(+). Lys128 (N6-AMP-lysine intermediate) is an active-site residue. NAD(+) contacts are provided by Arg149, Glu184, Lys300, and Lys324. Residues Cys418, Cys421, Cys436, and Cys441 each coordinate Zn(2+). Residues 598–686 (TRTDQLSGLN…GLGERGVAED (89 aa)) enclose the BRCT domain.

Belongs to the NAD-dependent DNA ligase family. LigA subfamily. The cofactor is Mn(2+).

It carries out the reaction NAD(+) + (deoxyribonucleotide)n-3'-hydroxyl + 5'-phospho-(deoxyribonucleotide)m = (deoxyribonucleotide)n+m + AMP + beta-nicotinamide D-nucleotide.. Its function is as follows. DNA ligase that catalyzes the formation of phosphodiester linkages between 5'-phosphoryl and 3'-hydroxyl groups in double-stranded DNA using NAD as a coenzyme and as the energy source for the reaction. It is essential for DNA replication and repair of damaged DNA. This is DNA ligase from Deinococcus radiodurans (strain ATCC 13939 / DSM 20539 / JCM 16871 / CCUG 27074 / LMG 4051 / NBRC 15346 / NCIMB 9279 / VKM B-1422 / R1).